The following is a 470-amino-acid chain: Neuronal acetylcholine receptor subunit beta-4 (470 aa).

The signal sequence occupies residues 1–3; it reads STA. Residues 4-216 lie on the Extracellular side of the membrane; it reads ADAEEKLMNH…IIKRKPLFYT (213 aa). N-linked (GlcNAc...) asparagine glycans are attached at residues N29, N118, and N146. C133 and C147 form a disulfide bridge. A helical membrane pass occupies residues 217–237; sequence INLIIPCVLITSLAILVFYLP. At 238 to 245 the chain is on the cytoplasmic side; the sequence is SDCGEKMT. E242 is a Na(+) binding site. Residues 246-266 traverse the membrane as a helical segment; the sequence is LCISVLLALTVFLLLISKIVP. At 267–278 the chain is on the extracellular side; the sequence is PTSLDVPLIGKY. The chain crosses the membrane as a helical span at residues 279 to 299; it reads LMFTMVLVTFSIVTSVCVLNV. Residues 300-438 are Cytoplasmic-facing; the sequence is HHRSPSTHTM…WKYVAMVVDR (139 aa). A helical transmembrane segment spans residues 439–459; it reads LFLWIFVLVCVLGTVGLFLQP. The Extracellular portion of the chain corresponds to 460 to 470; the sequence is LFQNHIAATNP.

This sequence belongs to the ligand-gated ion channel (TC 1.A.9) family. Acetylcholine receptor (TC 1.A.9.1) subfamily. Beta-4/CHRNB4 sub-subfamily. As to quaternary structure, neuronal AChR is composed of two different types of subunits: alpha and beta. CHRNB4/Beta-4 subunit can be combined to CHRNA2/alpha-2, CHRNA3/alpha-3 or CHRNA4/alpha-4, CHRNA5/alpha-5 and CHRNB3/beta-3 to give rise to functional receptors.

The protein resides in the synaptic cell membrane. It is found in the cell membrane. The enzyme catalyses Ca(2+)(in) = Ca(2+)(out). It catalyses the reaction K(+)(in) = K(+)(out). It carries out the reaction Na(+)(in) = Na(+)(out). Its activity is regulated as follows. Activated by a myriad of ligands such as acetylcholine, cytisine, nicotine, choline and epibatidine. The heteropentamer CHRNA3:CHRNB4 activity is blocked by the alpha-conotoxin ImI and AuIB. In terms of biological role, component of neuronal acetylcholine receptors (nAChRs) that function as pentameric, ligand-gated cation channels with high calcium permeability among other activities. nAChRs are excitatory neurotrasnmitter receptors formed by a collection of nAChR subunits known to mediate synaptic transmission in the nervous system and the neuromuscular junction. Each nAchR subunit confers differential attributes to channel properties, including activation, deactivation and desensitization kinetics, pH sensitivity, cation permeability, and binding to allosteric modulators. CHRNB4 forms heteropentameric neuronal acetylcholine receptors with CHRNA2, CHRNA3 and CHRNA4, as well as CHRNA5 and CHRNB3 as accesory subunits. CHRNA3:CHRNB4 being predominant in neurons of the autonomic ganglia, it is known as ganglionic nicotinic receptor. CHRNA3:CHRNB4 or CHRNA3:CHRNA5:CHRNB4 play also an important role in the habenulo-interpeduncular tract, modulating the mesolimbic dopamine system and affecting reward circuits and addiction. Hypothalamic CHRNA3:CHRNB4 nAChR activation by nicotine leads to activation of POMC neurons and a decrease in food intake. In Gallus gallus (Chicken), this protein is Neuronal acetylcholine receptor subunit beta-4 (CHRNB4).